The chain runs to 352 residues: MKEQLNQLSAYQPGLSPRALKEKYGIEGDLYKLASNENLYGPSPKVKEAISAHLDELYYYPETGSPTLKAAISKHLNVDQSRILFGAGLDEVILMISRAVLTPGDTIVTSEATFGQYYHNAIVESANVIQVPLKDGGFDLEGILKEVNEDTSLVWLCNPNNPTGTYFNHESLDSFLSQVPPHVPVIIDEAYFEFVTAEDYPDTLALQQKYDNAFLLRTFSKAYGLAGLRVGYVVASEHAIEKWNIIRPPFNVTRISEYAAVAALEDQQYLKEVTHKNSVERERFYQLPQSEYFLPSQTNFIFVKTKRVNELYEALLNVGCITRPFPTGVRITIGFKEQNDKMLEVLSNFKYE.

K221 is subject to N6-(pyridoxal phosphate)lysine.

This sequence belongs to the class-II pyridoxal-phosphate-dependent aminotransferase family. Histidinol-phosphate aminotransferase subfamily. In terms of assembly, homodimer. Pyridoxal 5'-phosphate serves as cofactor.

It catalyses the reaction L-histidinol phosphate + 2-oxoglutarate = 3-(imidazol-4-yl)-2-oxopropyl phosphate + L-glutamate. It participates in amino-acid biosynthesis; L-histidine biosynthesis; L-histidine from 5-phospho-alpha-D-ribose 1-diphosphate: step 7/9. The chain is Histidinol-phosphate aminotransferase from Staphylococcus aureus (strain Mu3 / ATCC 700698).